The primary structure comprises 252 residues: Aspartate/glutamate leucyltransferase (252 aa).

Belongs to the R-transferase family. Bpt subfamily.

The protein localises to the cytoplasm. The catalysed reaction is N-terminal L-glutamyl-[protein] + L-leucyl-tRNA(Leu) = N-terminal L-leucyl-L-glutamyl-[protein] + tRNA(Leu) + H(+). It catalyses the reaction N-terminal L-aspartyl-[protein] + L-leucyl-tRNA(Leu) = N-terminal L-leucyl-L-aspartyl-[protein] + tRNA(Leu) + H(+). Its function is as follows. Functions in the N-end rule pathway of protein degradation where it conjugates Leu from its aminoacyl-tRNA to the N-termini of proteins containing an N-terminal aspartate or glutamate. This is Aspartate/glutamate leucyltransferase from Xanthomonas campestris pv. campestris (strain B100).